Consider the following 153-residue polypeptide: DNA gyrase inhibitor (153 aa).

This sequence belongs to the DNA gyrase inhibitor family. In terms of assembly, interacts with DNA gyrase.

Its subcellular location is the cytoplasm. Its function is as follows. Inhibits the supercoiling activity of DNA gyrase. Acts by inhibiting DNA gyrase at an early step, prior to (or at the step of) binding of DNA by the gyrase. It protects cells against toxins that target DNA gyrase, by inhibiting activity of these toxins and reducing the formation of lethal double-strand breaks in the cell. This is DNA gyrase inhibitor from Pantoea sp. (strain At-9b).